A 622-amino-acid polypeptide reads, in one-letter code: Palmitoyltransferase pfa3 (622 aa).

Topologically, residues Met-1–Cys-38 are cytoplasmic. Residues Thr-39–Val-59 form a helical membrane-spanning segment. The Vacuolar portion of the chain corresponds to Asp-60–Ser-76. The helical transmembrane segment at Tyr-77 to Phe-97 threads the bilayer. Residues Thr-98 to Lys-175 are Cytoplasmic-facing. In terms of domain architecture, DHHC spans Arg-132–Ile-182. The chain crosses the membrane as a helical span at residues Ala-176 to Ala-196. Topologically, residues Ser-197–Asn-217 are vacuolar. Residues Tyr-218–Trp-238 traverse the membrane as a helical segment. Topologically, residues His-239–Asp-622 are cytoplasmic. Disordered regions lie at residues Pro-298–Ala-334, Arg-419–Asp-507, and Asp-533–Asp-622. Basic and acidic residues predominate over residues Arg-302–Arg-311. A compositionally biased stretch (polar residues) spans Thr-313–Pro-330. Over residues Arg-419 to Gln-428 the composition is skewed to basic and acidic residues. Residues Tyr-443 to Pro-455 show a composition bias toward polar residues. The span at Pro-466–Arg-488 shows a compositional bias: low complexity. Residues Asp-533 to Phe-547 show a composition bias toward acidic residues. The segment covering Asn-610 to Asp-622 has biased composition (basic and acidic residues).

This sequence belongs to the DHHC palmitoyltransferase family. PFA3 subfamily. Post-translationally, autopalmitoylated.

It localises to the vacuole membrane. It carries out the reaction L-cysteinyl-[protein] + hexadecanoyl-CoA = S-hexadecanoyl-L-cysteinyl-[protein] + CoA. In terms of biological role, palmitoyltransferase specific for vac8. Palmitoylates vac8 at one or more of its N-terminal cysteine residues, which is required for its proper membrane localization. The chain is Palmitoyltransferase pfa3 (ptr-3) from Neurospora crassa (strain ATCC 24698 / 74-OR23-1A / CBS 708.71 / DSM 1257 / FGSC 987).